The following is a 557-amino-acid chain: Urocanate hydratase (557 aa).

Residues 52–53 (GG), Gln-130, 176–178 (GMG), Glu-196, 242–243 (NA), 263–267 (QTSAH), 273–274 (YL), and Tyr-322 each bind NAD(+). Residue Cys-410 is part of the active site. Gly-492 serves as a coordination point for NAD(+).

The protein belongs to the urocanase family. NAD(+) is required as a cofactor.

It is found in the cytoplasm. The enzyme catalyses 4-imidazolone-5-propanoate = trans-urocanate + H2O. Its pathway is amino-acid degradation; L-histidine degradation into L-glutamate; N-formimidoyl-L-glutamate from L-histidine: step 2/3. Catalyzes the conversion of urocanate to 4-imidazolone-5-propionate. The polypeptide is Urocanate hydratase (Rhizobium meliloti (strain 1021) (Ensifer meliloti)).